The sequence spans 121 residues: Large ribosomal subunit protein uL18 (121 aa).

It belongs to the universal ribosomal protein uL18 family. Part of the 50S ribosomal subunit; part of the 5S rRNA/L5/L18/L25 subcomplex. Contacts the 5S and 23S rRNAs.

In terms of biological role, this is one of the proteins that bind and probably mediate the attachment of the 5S RNA into the large ribosomal subunit, where it forms part of the central protuberance. The protein is Large ribosomal subunit protein uL18 of Streptococcus suis (strain 98HAH33).